The primary structure comprises 687 residues: Adhesion G-protein coupled receptor G1 (687 aa).

A signal peptide spans 1 to 25 (MTAQSLLQTTLFLLSLLFLVQGAHG). 26–33 (RGHREDFR) contributes to the heparin binding site. At 26–402 (RGHREDFRFC…VEVDAVHKHY (377 aa)) the chain is on the extracellular side. 2 disulfides stabilise this stretch: Cys35–Cys91 and Cys121–Cys177. Asn39, Asn148, and Asn171 each carry an N-linked (GlcNAc...) asparagine glycan. 190–200 (LKHPQKASRRP) provides a ligand contact to heparin. The region spanning 224 to 395 (DTVSFEEDRI…AVLMVSSVEV (172 aa)) is the GAIN-B domain. 4 N-linked (GlcNAc...) asparagine glycosylation sites follow: Asn234, Asn303, Asn324, and Asn341. 2 disulfide bridges follow: Cys346-Cys377 and Cys366-Cys379. The tract at residues 346–395 (CVFWVEDPTLSSPGHWSSAGCETVRRETQTSCLCNHLTYFAVLMVSSVEV) is GPS. The tract at residues 384–397 (YFAVLMVSSVEVDA) is stachel. A helical transmembrane segment spans residues 403–423 (LSLLSYVGCVVSALACVVTIA). Over 424 to 442 (AYLCSRRKPRDYTIKVHMN) the chain is Cytoplasmic. Residues 443 to 463 (LLLAVFLLDTSFLLSEPVALT) traverse the membrane as a helical segment. The Extracellular portion of the chain corresponds to 464–470 (GSEAGCR). A helical membrane pass occupies residues 471-491 (ASAIFLHFSLLACLSWMGLEG). Over 492–512 (YNLYRLVVEVFGTYVPGYLLK) the chain is Cytoplasmic. The chain crosses the membrane as a helical span at residues 513–533 (LSAMGWGFPIFLVTLVALVDV). Residues 534-570 (DNYGPIILAVHRTPEGVIYPSMCWIRDSLVSYITNLG) lie on the Extracellular side of the membrane. Residues 571–591 (LFSLVFLFNMAMLATMVVQIL) form a helical membrane-spanning segment. Residues 592-603 (RLRPHTQKWSHV) lie on the Cytoplasmic side of the membrane. A helical membrane pass occupies residues 604–624 (LTLLGLSLVLGLPWALIFFSF). At 625-630 (ASGTFQ) the chain is on the extracellular side. Residues 631-651 (LVILYLFSIITSFQGFLIFIW) traverse the membrane as a helical segment. The Cytoplasmic portion of the chain corresponds to 652-687 (YWSMRLQARGGPSPLKSNSDSARLPISSGSTSSSRI). Positions 664–687 (SPLKSNSDSARLPISSGSTSSSRI) are disordered. Residues 678 to 687 (SSGSTSSSRI) show a composition bias toward low complexity.

The protein belongs to the G-protein coupled receptor 2 family. LN-TM7 subfamily. Heterodimer of 2 chains generated by proteolytic processing; the large extracellular N-terminal fragment (ADGRG1 NT) and the membrane-bound C-terminal fragment (ADGRG1-CT) predominantly remain associated and non-covalently linked. ADGRG1 NT self-associates in a trans-trans manner; the homophilic interaction enhances receptor signaling. Interacts with TGM2. Interacts with heparin; leading to the reduction of ADGRG1 shedding. Interacts with COL3A1. Part of a GPCR-tetraspanin complex at least consisting of ADGRG1, CD81, eventually CD9, and GNA11 in which CD81 is enhancing the association of ADGRG1 with GNA11. Autoproteolytically cleaved into 2 fragments; the large extracellular N-terminal fragment (ADGRG1 NT) and the membrane-bound C-terminal fragment (ADGRG1 CT) predominantly remain associated and non-covalently linked. Shedding to yield the secreted ADGRG1 N-terminal fragment seems to involve metalloprotease(s). In terms of processing, ubiquitinated. Undergoes polyubiquitination upon activation.

The protein localises to the cell membrane. It is found in the secreted. Its subcellular location is the membrane raft. Its activity is regulated as follows. Forms a heterodimer of 2 chains generated by proteolytic processing that remain associated through non-covalent interactions mediated by the GAIN-B domain. In the inactivated receptor, the Stachel sequence (also named stalk) is embedded in the GAIN-B domain, where it adopts a beta-strand conformation. On activation, the Stachel moves into the 7 transmembrane region and adopts a twisted hook-shaped configuration that forms contacts within the receptor, leading to coupling of a G-alpha protein, which activates signaling. The cleaved GAIN-B and N-terminal domains can then dissociate from the rest of the receptor. Its function is as follows. Adhesion G-protein coupled receptor (aGPCR) for steroid hormone 17alpha-hydroxypregnenolone (17-OH), which is involved in cell adhesion and cell-cell interactions. Ligand binding causes a conformation change that triggers signaling via guanine nucleotide-binding proteins (G proteins) and modulates the activity of downstream effectors, such as RhoA pathway. ADGRG1 is coupled to G(12) and/or G(13) G proteins (GNA12 and GNA13, respectively) and mediates the activation Rho small GTPases. Acts as a potent suppressor of ferroptosis: binding to 17-OH-binding initiates signaling that down-regulates CD36 and alleviates ferroptosis-induced liver injury. Ligand-binding also induces cell adhesion activity via association with proteins such as collagen III/COL3A1 and TGM2. Mediates cell matrix adhesion in developing neurons and hematopoietic stem cells. Involved in cortical development, specifically in maintenance of the pial basement membrane integrity and in cortical lamination: association with COL3A1 in the developing brain inhibits neuronal migration via activation of the RhoA pathway. Together with TGM2, acts as a regulator of myelination and myelin repair in oligodendrocyte precursor cells. Acts as a hemostatic sensor of shear force: G protein-coupled receptor signaling is activated in response to shear force in platelets, promoting G(13) G protein signaling, and platelet shape change and aggregation in a COL3A1-dependent manner. Acts as an inhibitor of VEGFA production thereby inhibiting angiogenesis through a signaling pathway mediated by PRKCA. Plays a role in the maintenance of hematopoietic stem cells in bone marrow niche. Plays an essential role in testis development. The sequence is that of Adhesion G-protein coupled receptor G1 (ADGRG1) from Pan troglodytes (Chimpanzee).